A 1127-amino-acid polypeptide reads, in one-letter code: Glutamate receptor-interacting protein 1 (1127 aa).

Gln-11 carries S-palmitoyl cysteine lipidation. Position 43 is a phosphoserine (Ser-43). 6 consecutive PDZ domains span residues 53 to 136, 150 to 238, 252 to 336, 471 to 560, 572 to 657, and 672 to 754; these read VVEL…EYEL, TVEV…EYDV, LVEV…LPHH, EVVL…EFDV, HVKL…RKDE, and TVEL…KKQT. 3 disordered regions span residues 752–802, 840–865, and 942–980; these read KQTD…PSVD, KQRTSLSPVPKPRSQTYPDVGLSNED, and MARSQLGRQASFQERSSSRPHYSQTTRSNTLPSDVGRKS. Polar residues-rich tracts occupy residues 840 to 856 and 947 to 973; these read KQRTSLSPVPKPRSQTY and LGRQASFQERSSSRPHYSQTTRSNTLP. The PDZ 7 domain maps to 1003–1085; the sequence is KVTLYKDSGM…KLDLVISRNP (83 aa). Positions 1108-1127 are disordered; that stretch reads FFQQPSHGGNLETREPTNTL.

In terms of assembly, interacts with EFNB3, GRIA2, GRIA3, GRIPAP1/GRASP1, PPFIA1, PPFIA4, FRAS1, PTPRF, liprins-alpha and the C-terminal tail of PRLHR. Can form homomultimers or heteromultimers with GRIP2. Interacts with EFNB1, EPHA7, EPHB2, KIF5A, KIF5B and KIF5C. Forms a ternary complex with GRIA2 and CSPG4. Interacts with ATAD1 in an ATP-dependent manner. ATAD1-catalyzed ATP hydrolysis disrupts binding to ATAD1 and to GRIA2 and leads to AMPAR complex disassembly. Interacts with SLC30A9 and PLCD4. Interacts with BUD23. Forms a complex with NSG1, GRIA2 and STX12; controls the intracellular fate of AMPAR and the endosomal sorting of the GRIA2 subunit toward recycling and membrane targeting. Interacts with NSG1. Post-translationally, palmitoylation of isoform 2. Expressed in brain. Isoform 2 is the major isoform in brain. Expressed in oligodendrocyte lineage cells.

It localises to the membrane. Its subcellular location is the cytoplasmic vesicle. The protein localises to the perikaryon. The protein resides in the cell projection. It is found in the dendrite. It localises to the cytoplasm. Its subcellular location is the endomembrane system. The protein localises to the postsynaptic cell membrane. The protein resides in the postsynaptic density. It is found in the endoplasmic reticulum membrane. Its function is as follows. May play a role as a localized scaffold for the assembly of a multiprotein signaling complex and as mediator of the trafficking of its binding partners at specific subcellular location in neurons. Through complex formation with NSG1, GRIA2 and STX12 controls the intracellular fate of AMPAR and the endosomal sorting of the GRIA2 subunit toward recycling and membrane targeting. This is Glutamate receptor-interacting protein 1 (Grip1) from Mus musculus (Mouse).